The chain runs to 349 residues: S-adenosylmethionine:tRNA ribosyltransferase-isomerase (349 aa).

Belongs to the QueA family. In terms of assembly, monomer.

The protein localises to the cytoplasm. It catalyses the reaction 7-aminomethyl-7-carbaguanosine(34) in tRNA + S-adenosyl-L-methionine = epoxyqueuosine(34) in tRNA + adenine + L-methionine + 2 H(+). The protein operates within tRNA modification; tRNA-queuosine biosynthesis. Its function is as follows. Transfers and isomerizes the ribose moiety from AdoMet to the 7-aminomethyl group of 7-deazaguanine (preQ1-tRNA) to give epoxyqueuosine (oQ-tRNA). The protein is S-adenosylmethionine:tRNA ribosyltransferase-isomerase of Pseudomonas entomophila (strain L48).